A 118-amino-acid polypeptide reads, in one-letter code: Protein TusC (118 aa).

Belongs to the DsrF/TusC family. Heterohexamer, formed by a dimer of trimers. The hexameric TusBCD complex contains 2 copies each of TusB, TusC and TusD. The TusBCD complex interacts with TusE.

Its subcellular location is the cytoplasm. In terms of biological role, part of a sulfur-relay system required for 2-thiolation of 5-methylaminomethyl-2-thiouridine (mnm(5)s(2)U) at tRNA wobble positions. The sequence is that of Protein TusC from Salmonella paratyphi C (strain RKS4594).